The sequence spans 290 residues: Glycine--tRNA ligase alpha subunit (290 aa).

It belongs to the class-II aminoacyl-tRNA synthetase family. As to quaternary structure, tetramer of two alpha and two beta subunits.

It is found in the cytoplasm. It carries out the reaction tRNA(Gly) + glycine + ATP = glycyl-tRNA(Gly) + AMP + diphosphate. The chain is Glycine--tRNA ligase alpha subunit from Prochlorococcus marinus (strain NATL2A).